Reading from the N-terminus, the 312-residue chain is Nicotinamide adenine dinucleotide transporter 1, chloroplastic (312 aa).

Solcar repeat units lie at residues 11 to 103, 111 to 199, and 211 to 299; these read KNVL…LKSF, LSVG…IKVY, and LNAR…VHRF. Transmembrane regions (helical) follow at residues 17–37, 78–98, 117–137, 171–191, 216–232, and 271–293; these read AAAG…LDVI, GLSP…TMYD, VLAA…LWVV, GLYS…IQFP, VAVA…TLTY, and FYRG…FTSF.

The protein belongs to the mitochondrial carrier (TC 2.A.29) family. In terms of tissue distribution, highly expressed in young leaf mesophyll cells, root tips and at the branches of adventitious roots. Low expression in all flower tissues and not detected in siliques and seeds.

The protein localises to the plastid. It localises to the chloroplast membrane. Its activity is regulated as follows. Inhibited by pyridoxal 5'-phosphate, bathophenanthroline, tannic acid, mersalyl, mercuric chloride, p-hydroxymercuribenzoate, p-hydroxymercuribenzoate sulfonate, bromocresol purple and N-ethylmaleimide. Functionally, mediates the NAD(+) import into chloroplast. Favors the NAD(+)(in)/ADP or AMP(out) antiport exchange, but is also able to catalyze a low unidirectional transport (uniport) of NAD(+). Transports NAD(+), nicotinic acid adenine dinucleotide, nicotinamide mononucleotide, nicotinic acid mononucleotide, FAD, FMN, TTP, TDP, TMP, UTP, UDP, UMP, CTP, CDP, CMP, GTP, GDP, GMP, 3'-AMP, ATP, ADP, and AMP, has low transport activity with cAMP, pyrophosphate, NADH and alpha-NAD(+), and has no activity with NADP(+), NADPH, nicotinamide, nicotinic acid, adenosine, thiamine mono- or diphosphate, inorganic phosphate, CoA, folate, NaCl, malate, malonate, citrate, fumarate, aspartate, glutamate, S-adenosylmethionine, lysine, arginine, and ornithine. This chain is Nicotinamide adenine dinucleotide transporter 1, chloroplastic (NDT1), found in Arabidopsis thaliana (Mouse-ear cress).